The primary structure comprises 614 residues: MNLCSSAGATASTSSLSSSGHVESNSSGPSEAIHCFGVVGGGGNSGGSGRADTALNQSNRSTVNGGGGNPTNSNGPNLTHNEINAIMPPETRPKMVTVKHPESNKPKPTTKKIVKNIQADQDVIKALQRCRDEGIKRLDLSKSSITVLPNTVRECVHLTELYLYSNKIGQLPTEIGCLVNLRNLALNENSLTSLPESLKHCTQLKVLDLRHNKLAEIPSVIYRLRSLTTLYLRFNRITAVADDLRQLVNLTMLSLRENKIKELGSAIGALVNLTTLDVSHNHLEHLPDDIGNCVNLSALDLQHNELLDIPDSIGNLKSLVRLGLRYNRLNSVPISLKNCKSMDEFNVEGNGITQLPDGMLASLSALTTITLSRNQFTSYPTGGPAQFTNVYSINLEHNRIDKIPYGIFSRAKGLTKLNMKENMLTALPLDVGTWVNMVELNLATNALQKLPDDIMNLQNLEILILSNNMLKKIPNTIGNLRKLRILDLEENRIEVLPHEIGLLHELQRLILQTNQITMLPRSIGHLSNLTHLSVSENNLQFLPEEIGSLESLENLYINQNPGLEKLPFELALCQNLKYLNIDKCPLGTIPPEIQAGGPSLVLQWLKMHSPYRQM.

2 disordered regions span residues 1–29 and 44–79; these read MNLC…SSGP and NSGG…PNLT. LRR repeat units follow at residues 134–155, 157–178, 180–201, 203–224, 226–247, 249–270, 272–293, 295–316, 318–340, 341–362, 365–386, 389–410, 413–434, 436–457, 459–480, 482–503, 505–526, 528–549, 551–573, and 575–596; these read GIKR…VREC, HLTE…IGCL, NLRN…LKHC, QLKV…IYRL, SLTT…LRQL, NLTM…IGAL, NLTT…IGNC, NLSA…IGNL, SLVR…KNCK, SMDE…MLAS, ALTT…GPAQ, NVYS…IFSR, GLTK…VGTW, NMVE…IMNL, NLEI…IGNL, KLRI…IGLL, ELQR…IGHL, NLTH…IGSL, SLEN…LALC, and NLKY…IQAG.

This sequence belongs to the SHOC2 family.

Functionally, acts as a Ras effector and participates in MAPK pathway activation. Probably acts as a regulatory subunit of protein phosphatase that specifically dephosphorylates Raf kinase and stimulate Raf activity at specialized signaling complexes upon Ras activation. This chain is Leucine-rich repeat protein soc-2 homolog (Sur-8), found in Drosophila virilis (Fruit fly).